Reading from the N-terminus, the 92-residue chain is MLNINSDAKLKDLLEFPCSFTYKVMGHAKPELPERVLEVIQRHAPGDYSPRVKPSAKGNYHSVSVTIHATSIEQVEILYKELGEIDIVRMVL.

Belongs to the UPF0250 family.

This is UPF0250 protein VC0395_A0469/VC395_0960 from Vibrio cholerae serotype O1 (strain ATCC 39541 / Classical Ogawa 395 / O395).